A 75-amino-acid chain; its full sequence is Large ribosomal subunit protein bL31 (75 aa).

In terms of assembly, part of the 50S ribosomal subunit.

Functionally, binds the 23S rRNA. This is Large ribosomal subunit protein bL31 from Rhodopseudomonas palustris (strain ATCC BAA-98 / CGA009).